We begin with the raw amino-acid sequence, 278 residues long: NAD kinase (278 aa).

Aspartate 56 serves as the catalytic Proton acceptor. Residues 56–57 (DG), 132–133 (NE), arginine 158, aspartate 160, and 171–176 (TAYNKS) contribute to the NAD(+) site.

It belongs to the NAD kinase family. A divalent metal cation serves as cofactor.

The protein localises to the cytoplasm. It carries out the reaction NAD(+) + ATP = ADP + NADP(+) + H(+). In terms of biological role, involved in the regulation of the intracellular balance of NAD and NADP, and is a key enzyme in the biosynthesis of NADP. Catalyzes specifically the phosphorylation on 2'-hydroxyl of the adenosine moiety of NAD to yield NADP. This Streptococcus agalactiae serotype V (strain ATCC BAA-611 / 2603 V/R) protein is NAD kinase.